The chain runs to 315 residues: Ribonuclease HII (315 aa).

The RNase H type-2 domain maps to 78 to 267 (TLVAGVDEAG…VREALGLAPL (190 aa)). Aspartate 84, glutamate 85, and aspartate 176 together coordinate a divalent metal cation. The tract at residues 273–292 (APPPESAAEPGGEGAIAGIA) is disordered. Low complexity predominate over residues 278–292 (SAAEPGGEGAIAGIA).

This sequence belongs to the RNase HII family. Requires Mn(2+) as cofactor. Mg(2+) is required as a cofactor.

It localises to the cytoplasm. The enzyme catalyses Endonucleolytic cleavage to 5'-phosphomonoester.. Endonuclease that specifically degrades the RNA of RNA-DNA hybrids. The polypeptide is Ribonuclease HII (Anaeromyxobacter sp. (strain Fw109-5)).